The following is a 305-amino-acid chain: tRNA dimethylallyltransferase (305 aa).

Residue G14–S21 participates in ATP binding. T16–S21 is a substrate binding site. The interval D39–Q42 is interaction with substrate tRNA.

The protein belongs to the IPP transferase family. Monomer. Mg(2+) is required as a cofactor.

It catalyses the reaction adenosine(37) in tRNA + dimethylallyl diphosphate = N(6)-dimethylallyladenosine(37) in tRNA + diphosphate. Functionally, catalyzes the transfer of a dimethylallyl group onto the adenine at position 37 in tRNAs that read codons beginning with uridine, leading to the formation of N6-(dimethylallyl)adenosine (i(6)A). The sequence is that of tRNA dimethylallyltransferase from Bradyrhizobium sp. (strain BTAi1 / ATCC BAA-1182).